A 616-amino-acid chain; its full sequence is DNA mismatch repair protein MutL (616 aa).

It belongs to the DNA mismatch repair MutL/HexB family.

This protein is involved in the repair of mismatches in DNA. It is required for dam-dependent methyl-directed DNA mismatch repair. May act as a 'molecular matchmaker', a protein that promotes the formation of a stable complex between two or more DNA-binding proteins in an ATP-dependent manner without itself being part of a final effector complex. In Syntrophus aciditrophicus (strain SB), this protein is DNA mismatch repair protein MutL.